The chain runs to 510 residues: Maturase K (510 aa).

This sequence belongs to the intron maturase 2 family. MatK subfamily.

It is found in the plastid. Its function is as follows. Usually encoded in the trnK tRNA gene intron. Probably assists in splicing its own and other chloroplast group II introns. The protein is Maturase K of Aneura mirabilis (Parasitic liverwort).